The chain runs to 185 residues: Ribosome-recycling factor (185 aa).

The protein belongs to the RRF family.

It is found in the cytoplasm. In terms of biological role, responsible for the release of ribosomes from messenger RNA at the termination of protein biosynthesis. May increase the efficiency of translation by recycling ribosomes from one round of translation to another. This Streptococcus pneumoniae (strain P1031) protein is Ribosome-recycling factor.